A 199-amino-acid chain; its full sequence is Small ribosomal subunit protein uS2 (199 aa).

It belongs to the universal ribosomal protein uS2 family.

The sequence is that of Small ribosomal subunit protein uS2 (rps2) from Thermoplasma volcanium (strain ATCC 51530 / DSM 4299 / JCM 9571 / NBRC 15438 / GSS1).